An 880-amino-acid chain; its full sequence is Leucine--tRNA ligase (880 aa).

The short motif at 46-56 is the 'HIGH' region element; the sequence is PYPSGALHMGH. Residues 638–642 carry the 'KMSKS' region motif; it reads KMSKS. K641 contacts ATP.

It belongs to the class-I aminoacyl-tRNA synthetase family.

It localises to the cytoplasm. The catalysed reaction is tRNA(Leu) + L-leucine + ATP = L-leucyl-tRNA(Leu) + AMP + diphosphate. In Stenotrophomonas maltophilia (strain R551-3), this protein is Leucine--tRNA ligase.